The chain runs to 72 residues: UPF0346 protein GTNG_1419 (72 aa).

This sequence belongs to the UPF0346 family.

This Geobacillus thermodenitrificans (strain NG80-2) protein is UPF0346 protein GTNG_1419.